The primary structure comprises 194 residues: ATP-dependent Clp protease proteolytic subunit (194 aa).

The Nucleophile role is filled by S98. H123 is an active-site residue.

It belongs to the peptidase S14 family. As to quaternary structure, fourteen ClpP subunits assemble into 2 heptameric rings which stack back to back to give a disk-like structure with a central cavity, resembling the structure of eukaryotic proteasomes.

The protein localises to the cytoplasm. It catalyses the reaction Hydrolysis of proteins to small peptides in the presence of ATP and magnesium. alpha-casein is the usual test substrate. In the absence of ATP, only oligopeptides shorter than five residues are hydrolyzed (such as succinyl-Leu-Tyr-|-NHMec, and Leu-Tyr-Leu-|-Tyr-Trp, in which cleavage of the -Tyr-|-Leu- and -Tyr-|-Trp bonds also occurs).. Functionally, cleaves peptides in various proteins in a process that requires ATP hydrolysis. Has a chymotrypsin-like activity. Plays a major role in the degradation of misfolded proteins. This is ATP-dependent Clp protease proteolytic subunit from Syntrophotalea carbinolica (strain DSM 2380 / NBRC 103641 / GraBd1) (Pelobacter carbinolicus).